A 234-amino-acid chain; its full sequence is Proteasome subunit alpha type-2 (234 aa).

The protein belongs to the peptidase T1A family. As to quaternary structure, the 26S proteasome consists of a 20S proteasome core and two 19S regulatory subunits. The 20S proteasome core is composed of 28 subunits that are arranged in four stacked rings, resulting in a barrel-shaped structure. The two end rings are each formed by seven alpha subunits, and the two central rings are each formed by seven beta subunits. The catalytic chamber with the active sites is on the inside of the barrel. Interacts with Rpn6.

The protein resides in the cytoplasm. The protein localises to the nucleus. Its function is as follows. The proteasome is a multicatalytic proteinase complex which is characterized by its ability to cleave peptides with Arg, Phe, Tyr, Leu, and Glu adjacent to the leaving group at neutral or slightly basic pH. The proteasome has an ATP-dependent proteolytic activity. This is Proteasome subunit alpha type-2 (Prosalpha2) from Drosophila melanogaster (Fruit fly).